Reading from the N-terminus, the 189-residue chain is Xanthine phosphoribosyltransferase (189 aa).

Positions 20 and 27 each coordinate xanthine. A128–A132 contacts 5-phospho-alpha-D-ribose 1-diphosphate. K156 provides a ligand contact to xanthine.

This sequence belongs to the purine/pyrimidine phosphoribosyltransferase family. Xpt subfamily. As to quaternary structure, homodimer.

It is found in the cytoplasm. It carries out the reaction XMP + diphosphate = xanthine + 5-phospho-alpha-D-ribose 1-diphosphate. It functions in the pathway purine metabolism; XMP biosynthesis via salvage pathway; XMP from xanthine: step 1/1. Converts the preformed base xanthine, a product of nucleic acid breakdown, to xanthosine 5'-monophosphate (XMP), so it can be reused for RNA or DNA synthesis. The protein is Xanthine phosphoribosyltransferase of Pseudomonas syringae pv. syringae (strain B728a).